Here is a 565-residue protein sequence, read N- to C-terminus: NAD-dependent malic enzyme (565 aa).

Catalysis depends on Y104, which acts as the Proton donor. R157 contributes to the NAD(+) binding site. The Proton acceptor role is filled by K175. E246, D247, and D270 together coordinate a divalent metal cation. D270 and N418 together coordinate NAD(+).

Belongs to the malic enzymes family. Homotetramer. Mg(2+) is required as a cofactor. Mn(2+) serves as cofactor.

The enzyme catalyses (S)-malate + NAD(+) = pyruvate + CO2 + NADH. It carries out the reaction oxaloacetate + H(+) = pyruvate + CO2. This is NAD-dependent malic enzyme from Shigella sonnei (strain Ss046).